The chain runs to 131 residues: Glycine cleavage system H protein (131 aa).

The Lipoyl-binding domain occupies threonine 24–glutamine 106. Position 65 is an N6-lipoyllysine (lysine 65).

It belongs to the GcvH family. The glycine cleavage system is composed of four proteins: P, T, L and H. (R)-lipoate is required as a cofactor.

Functionally, the glycine cleavage system catalyzes the degradation of glycine. The H protein shuttles the methylamine group of glycine from the P protein to the T protein. This chain is Glycine cleavage system H protein, found in Mycolicibacterium vanbaalenii (strain DSM 7251 / JCM 13017 / BCRC 16820 / KCTC 9966 / NRRL B-24157 / PYR-1) (Mycobacterium vanbaalenii).